The following is a 347-amino-acid chain: D-alanine--D-alanine ligase (347 aa).

One can recognise an ATP-grasp domain in the interval 134 to 332 (KLYAKDLGVK…LAQSLPKTPK (199 aa)). An ATP-binding site is contributed by 161–216 (LIGFNFPFIVKPSNAGSSLGVNVVKEEKELIYALDSAFEYSKEVLIEPFIQGVKEY). Asp288, Glu300, and Asn302 together coordinate Mg(2+).

Belongs to the D-alanine--D-alanine ligase family. It depends on Mg(2+) as a cofactor. The cofactor is Mn(2+).

It localises to the cytoplasm. It carries out the reaction 2 D-alanine + ATP = D-alanyl-D-alanine + ADP + phosphate + H(+). It functions in the pathway cell wall biogenesis; peptidoglycan biosynthesis. In terms of biological role, cell wall formation. This Helicobacter pylori (strain J99 / ATCC 700824) (Campylobacter pylori J99) protein is D-alanine--D-alanine ligase.